The following is a 352-amino-acid chain: Protein RecA (352 aa).

66-73 is a binding site for ATP; it reads GPESSGKT. A disordered region spans residues 330–352; sequence TKDDSKVATVDKANEEQAAEPVQ.

This sequence belongs to the RecA family.

The protein resides in the cytoplasm. Functionally, can catalyze the hydrolysis of ATP in the presence of single-stranded DNA, the ATP-dependent uptake of single-stranded DNA by duplex DNA, and the ATP-dependent hybridization of homologous single-stranded DNAs. It interacts with LexA causing its activation and leading to its autocatalytic cleavage. This Psychrobacter cryohalolentis (strain ATCC BAA-1226 / DSM 17306 / VKM B-2378 / K5) protein is Protein RecA.